A 393-amino-acid polypeptide reads, in one-letter code: tRNA(Met) cytidine acetate ligase (393 aa).

Gly-81, Asn-142, and Arg-167 together coordinate ATP.

It belongs to the TmcAL family.

It is found in the cytoplasm. The catalysed reaction is cytidine(34) in elongator tRNA(Met) + acetate + ATP = N(4)-acetylcytidine(34) in elongator tRNA(Met) + AMP + diphosphate. Its function is as follows. Catalyzes the formation of N(4)-acetylcytidine (ac(4)C) at the wobble position of elongator tRNA(Met), using acetate and ATP as substrates. First activates an acetate ion to form acetyladenylate (Ac-AMP) and then transfers the acetyl group to tRNA to form ac(4)C34. The sequence is that of tRNA(Met) cytidine acetate ligase from Bacillus cereus (strain ATCC 10987 / NRS 248).